A 423-amino-acid chain; its full sequence is Adenylosuccinate synthetase (423 aa).

Residues 12 to 18 and 40 to 42 contribute to the GTP site; these read GDEGKGK and GHT. The Proton acceptor role is filled by D13. Positions 13 and 40 each coordinate Mg(2+). Residues 13–16, 38–41, T129, R143, Q221, T236, and R300 each bind IMP; these read DEGK and NAGH. H41 functions as the Proton donor in the catalytic mechanism. 296 to 302 lines the substrate pocket; that stretch reads AVTGRKR. Residues R302, 328-330, and 408-410 each bind GTP; these read KSD and SVG.

The protein belongs to the adenylosuccinate synthetase family. In terms of assembly, homodimer. Mg(2+) serves as cofactor.

It is found in the cytoplasm. It carries out the reaction IMP + L-aspartate + GTP = N(6)-(1,2-dicarboxyethyl)-AMP + GDP + phosphate + 2 H(+). It participates in purine metabolism; AMP biosynthesis via de novo pathway; AMP from IMP: step 1/2. In terms of biological role, plays an important role in the de novo pathway of purine nucleotide biosynthesis. Catalyzes the first committed step in the biosynthesis of AMP from IMP. The sequence is that of Adenylosuccinate synthetase from Parabacteroides distasonis (strain ATCC 8503 / DSM 20701 / CIP 104284 / JCM 5825 / NCTC 11152).